The following is a 902-amino-acid chain: MAGRSCLELGLFCWVLLAVPVGPQPASSVPGAPLTTLTPPPQSEASMLSLNLGLNFKFHLRGPAAVWGNPVTETHPLSPGLGQESEEEEEGDLRTDPLWELLVGSPGNYLPEWGSAEGSFTPWASSLPPESTSRLSGPTKRPTAHSQPRMGTVTWATALTATAPPTSAPRPHQSELELKFDVALRAGAAPTLGHRSLPLLPSLRASLAEIAGRLGPFGFFGTTVSPLRNFSRQSYPGTTAHPSFAFEVSDSPGLFGTTGSRPPPLLERKFSSPSLLDSVASPSSASVKTTPVQQDPTVSTSGPDELSPASFGNPSTQPGCEPGSCSEPELLDDLGQPPASPLPLFFLTLEADWAEARARWGLAWEAHVYGAGALFGLVALLALLALALLPWRCPPGAPCLALLDLLLLSAGTTRAFPLFYDAYGHRDRLPTLVWLLLQDLPLPCLAAGLGLACLLLARPRTPRCPAGLAALLLLGLGLAAAAALGSAVHRPLRPLRLASRGLHAFLAAFLSGLLLALSCWGGRRRRAGAPLGGAGFKGATPVPQVRSPFAPRESWRRAARTAPVAGTFGLLSGALQGYEVLHALGYGSQAGLEGPWPWWAFQLGLRLGEVGVALPLALLGLYPALCSPRVPRRCWAKLFRLSPGHAAPLLPGGWVPGIPDKEPLGSAIARGDAELLQLCALAGPGPDLLLQGGGCRGFEGAGANPTQSTASSPSSDCTVDFRPPSPINLRRSIEEALCSEALLAPGLFQGPAFGEALPGLGLYRTISLGNKIGAGPSEKSENVPGSPAPPELPSPGAWPPGSSASSGSLCGLSRDSSSMLLCSSPDRPPRCPLVCVLSPPRPSESSPSLPASGSYQALSPPSRDSPEHASELQAEEALLQEQFLDACRQIDELSMGSDTIDL.

The first 18 residues, 1-18, serve as a signal peptide directing secretion; sequence MAGRSCLELGLFCWVLLA. 3 disordered regions span residues 72–92, 121–149, and 281–333; these read TETHPLSPGLGQESEEEEEGD, TPWASSLPPESTSRLSGPTKRPTAHSQPR, and SPSS…LLDD. Composition is skewed to polar residues over residues 122 to 136 and 281 to 302; these read PWASSLPPESTSRLS and SPSSASVKTTPVQQDPTVSTSG. Transmembrane regions (helical) follow at residues 371–391, 393–413, 432–452, 468–488, and 501–521; these read AGALFGLVALLALLALALLPW, CPPGAPCLALLDLLLLSAGTT, LVWLLLQDLPLPCLAAGLGLA, LAALLLLGLGLAAAAALGSAV, and GLHAFLAAFLSGLLLALSCWG. Ser642 carries the post-translational modification Phosphoserine. Disordered stretches follow at residues 701-723, 774-811, and 839-872; these read AGANPTQSTASSPSSDCTVDFRP, AGPSEKSENVPGSPAPPELPSPGAWPPGSSASSGSLCG, and PPRPSESSPSLPASGSYQALSPPSRDSPEHASEL. Residues 704–717 are compositionally biased toward polar residues; it reads NPTQSTASSPSSDC. Positions 786 to 798 are enriched in pro residues; sequence SPAPPELPSPGAW. 2 stretches are compositionally biased toward low complexity: residues 799-811 and 843-854; these read PPGSSASSGSLCG and SESSPSLPASGS.

The protein localises to the membrane. This chain is Proline-rich transmembrane protein 4 (Prrt4), found in Mus musculus (Mouse).